Consider the following 338-residue polypeptide: CRISPR-associated endonuclease Cas1 (338 aa).

Glu-155, His-220, and Glu-235 together coordinate Mn(2+).

This sequence belongs to the CRISPR-associated endonuclease Cas1 family. In terms of assembly, homodimer, forms a heterotetramer with a Cas2 homodimer. Requires Mg(2+) as cofactor. It depends on Mn(2+) as a cofactor.

CRISPR (clustered regularly interspaced short palindromic repeat), is an adaptive immune system that provides protection against mobile genetic elements (viruses, transposable elements and conjugative plasmids). CRISPR clusters contain spacers, sequences complementary to antecedent mobile elements, and target invading nucleic acids. CRISPR clusters are transcribed and processed into CRISPR RNA (crRNA). Acts as a dsDNA endonuclease. Involved in the integration of spacer DNA into the CRISPR cassette. The type III-A Csm effector complex binds crRNA and acts as a crRNA-guided RNase, DNase and cyclic oligoadenylate synthase; binding of target RNA cognate to the crRNA is required for all activities. In Mycobacterium tuberculosis (strain CDC 1551 / Oshkosh), this protein is CRISPR-associated endonuclease Cas1.